Reading from the N-terminus, the 553-residue chain is Transcriptional regulator HilA (553 aa).

The segment at residues 11-107 (NKKFVFDDFI…LYGQGYRFNR (97 aa)) is a DNA-binding region (ompR/PhoB-type). Aspartate 62 carries the 4-aspartylphosphate modification. One copy of the TPR repeat lies at 372–405 (ADIKYYYGWNLFMAGQLEEALQTINECLKLDPTR).

In terms of biological role, the main transcriptional regulator of the Salmonella pathogenicity island 1 (SPI1) gene expression. Activates the expression of invasion genes by a direct action at their promoters and also indirectly by increasing the level of invF. Also binds upstream of prgH and directly activates the expression of prgHIJK operon. The polypeptide is Transcriptional regulator HilA (hilA) (Salmonella typhi).